The sequence spans 361 residues: Mitochondrial fission regulator 2 (361 aa).

At serine 137 the chain carries Phosphoserine. Disordered regions lie at residues 191 to 286 (FIDL…VPNM) and 298 to 322 (LRPVERSPGGRPVQKRKRRSSEWDP). The segment covering 219-231 (VLPPPPPPPPPPQ) has biased composition (pro residues). Low complexity predominate over residues 232–244 (FSLQPPSSLPMQP). Over residues 250–282 (HDIDSLATEMERQLSGVKKTDDSHHSKSQRLRD) the composition is skewed to basic and acidic residues. Residues serine 304 and serine 340 each carry the phosphoserine modification.

The protein belongs to the MTFR1 family. Expressed predominantly in testis (at protein level). Expressed to a lower extent in spleen.

It is found in the mitochondrion. In terms of biological role, may play a role in mitochondrial aerobic respiration essentially in the testis. Can also promote mitochondrial fission. This Mus musculus (Mouse) protein is Mitochondrial fission regulator 2 (Mtfr2).